We begin with the raw amino-acid sequence, 224 residues long: PKHD-type hydroxylase CYB_2270 (224 aa).

A Fe2OG dioxygenase domain is found at 78-176 (LIHSILISCY…RYAAVSWVQS (99 aa)). Fe cation contacts are provided by H96, D98, and H157. R167 contributes to the 2-oxoglutarate binding site.

Fe(2+) is required as a cofactor. Requires L-ascorbate as cofactor.

This Synechococcus sp. (strain JA-2-3B'a(2-13)) (Cyanobacteria bacterium Yellowstone B-Prime) protein is PKHD-type hydroxylase CYB_2270.